The primary structure comprises 316 residues: Phospholipase A1 2 (316 aa).

An N-terminal signal peptide occupies residues Ala-1–Leu-4. Positions Thr-5–Arg-14 are excised as a propeptide. An intrachain disulfide couples Cys-20 to Cys-103. Catalysis depends on Ser-153, which acts as the Nucleophile. Asp-181 functions as the Charge relay system in the catalytic mechanism. Cystine bridges form between Cys-192/Cys-197 and Cys-235/Cys-240. His-242 functions as the Charge relay system in the catalytic mechanism. Intrachain disulfides connect Cys-257–Cys-284, Cys-258–Cys-309, and Cys-277–Cys-282.

This sequence belongs to the AB hydrolase superfamily. Lipase family. Expressed by the venom gland.

The protein resides in the secreted. The enzyme catalyses a 1,2-diacyl-sn-glycero-3-phosphocholine + H2O = a 2-acyl-sn-glycero-3-phosphocholine + a fatty acid + H(+). In terms of biological role, catalyzes the hydrolysis of phosphatidylcholine with phospholipase A1 activity. May act as an allergen and induce hemolytic activity. In Polistes dominula (European paper wasp), this protein is Phospholipase A1 2.